Consider the following 734-residue polypeptide: 1,4-alpha-glucan branching enzyme GlgB (734 aa).

D414 serves as the catalytic Nucleophile. The Proton donor role is filled by E467.

It belongs to the glycosyl hydrolase 13 family. GlgB subfamily. As to quaternary structure, monomer.

The enzyme catalyses Transfers a segment of a (1-&gt;4)-alpha-D-glucan chain to a primary hydroxy group in a similar glucan chain.. Its pathway is glycan biosynthesis; glycogen biosynthesis. Functionally, catalyzes the formation of the alpha-1,6-glucosidic linkages in glycogen by scission of a 1,4-alpha-linked oligosaccharide from growing alpha-1,4-glucan chains and the subsequent attachment of the oligosaccharide to the alpha-1,6 position. The polypeptide is 1,4-alpha-glucan branching enzyme GlgB (Myxococcus xanthus (strain DK1622)).